Here is a 138-residue protein sequence, read N- to C-terminus: Large ribosomal subunit protein uL16 (138 aa).

A disordered region spans residues 1–22; the sequence is MQQPARTKYRKQQKGRNKGIAT. The segment covering 7 to 17 has biased composition (basic residues); the sequence is TKYRKQQKGRN.

Belongs to the universal ribosomal protein uL16 family. In terms of assembly, part of the 50S ribosomal subunit.

In terms of biological role, binds 23S rRNA and is also seen to make contacts with the A and possibly P site tRNAs. This Nitrosospira multiformis (strain ATCC 25196 / NCIMB 11849 / C 71) protein is Large ribosomal subunit protein uL16.